We begin with the raw amino-acid sequence, 349 residues long: MATGTQPDAGQILNSLINSILLIDDNLAIHYANPAAQQLLAQSSRKLFGTPLPELLSYFSLNIELMQESLEAGQGFTDNEVTLVIDGRSHILSVTAQRMPDGMILLEMAPMDNQRRLSQEQLQHAQQVAARDLVRGLAHEIKNPLGGLRGAAQLLSKALPDPSLLEYTKVIIEQADRLRNLVDRLLGPQLPGTRVTESIHKVAERVVTLVSMELPDNVRLIRDYDPSLPELAHDPDQIEQVLLNIVRNALQALGPEGGEIILRTRTAFQLTLHGERYRLAARIDVEDNGPGIPPHLQDTLFYPMVSGREGGTGLGLSIARNLIDQHSGKIEFTSWPGHTEFSVYLPIRK.

The PAS domain occupies 5 to 78 (TQPDAGQILN…SLEAGQGFTD (74 aa)). The Histidine kinase domain occupies 136–349 (GLAHEIKNPL…EFSVYLPIRK (214 aa)). Position 139 is a phosphohistidine; by autocatalysis (H139). ATP is bound at residue K329.

Autophosphorylated.

The protein resides in the cytoplasm. It carries out the reaction ATP + protein L-histidine = ADP + protein N-phospho-L-histidine.. Functionally, member of the two-component regulatory system NtrB/NtrC, which controls expression of the nitrogen-regulated (ntr) genes in response to nitrogen limitation. Under conditions of nitrogen limitation, NtrB autophosphorylates and transfers the phosphoryl group to NtrC. In the presence of nitrogen, acts as a phosphatase that dephosphorylates and inactivates NtrC. The protein is Sensory histidine kinase/phosphatase NtrB (glnL) of Escherichia coli O157:H7.